A 914-amino-acid chain; its full sequence is Protein translocase subunit SecA (914 aa).

Residues Gln-87, Gly-105–Thr-109, and Asp-508 each bind ATP. Residues Cys-898, Cys-900, Cys-909, and His-910 each contribute to the Zn(2+) site.

Belongs to the SecA family. Monomer and homodimer. Part of the essential Sec protein translocation apparatus which comprises SecA, SecYEG and auxiliary proteins SecDF-YajC and YidC. The cofactor is Zn(2+).

It localises to the cell inner membrane. It is found in the cytoplasm. The enzyme catalyses ATP + H2O + cellular proteinSide 1 = ADP + phosphate + cellular proteinSide 2.. In terms of biological role, part of the Sec protein translocase complex. Interacts with the SecYEG preprotein conducting channel. Has a central role in coupling the hydrolysis of ATP to the transfer of proteins into and across the cell membrane, serving both as a receptor for the preprotein-SecB complex and as an ATP-driven molecular motor driving the stepwise translocation of polypeptide chains across the membrane. The protein is Protein translocase subunit SecA of Xylella fastidiosa (strain M12).